A 415-amino-acid chain; its full sequence is Histidine--tRNA ligase (415 aa).

This sequence belongs to the class-II aminoacyl-tRNA synthetase family. In terms of assembly, homodimer.

The protein resides in the cytoplasm. The enzyme catalyses tRNA(His) + L-histidine + ATP = L-histidyl-tRNA(His) + AMP + diphosphate + H(+). This is Histidine--tRNA ligase from Clostridium botulinum (strain 657 / Type Ba4).